We begin with the raw amino-acid sequence, 154 residues long: Pseudo histidine-containing phosphotransfer protein 6 (154 aa).

The residue at position 1 (Met1) is an N-acetylmethionine. Residues 41 to 137 (SPNFVYDVIN…HYLKNMMHEL (97 aa)) enclose the HPt domain.

In terms of assembly, interacts with AHK5.

The protein resides in the cytoplasm. Its subcellular location is the cytosol. It localises to the nucleus. Functionally, functions as a two-component phosphorelay mediator between cytokinin sensor histidine kinases and response regulators (B-type ARRs). Plays an important role in propagating cytokinin signal transduction. The polypeptide is Pseudo histidine-containing phosphotransfer protein 6 (AHP6) (Arabidopsis thaliana (Mouse-ear cress)).